The following is a 451-amino-acid chain: Phosphoglucosamine mutase (451 aa).

Serine 102 functions as the Phosphoserine intermediate in the catalytic mechanism. Residues serine 102, aspartate 242, aspartate 244, and aspartate 246 each contribute to the Mg(2+) site. Serine 102 bears the Phosphoserine mark.

It belongs to the phosphohexose mutase family. The cofactor is Mg(2+). In terms of processing, activated by phosphorylation.

It carries out the reaction alpha-D-glucosamine 1-phosphate = D-glucosamine 6-phosphate. In terms of biological role, catalyzes the conversion of glucosamine-6-phosphate to glucosamine-1-phosphate. The sequence is that of Phosphoglucosamine mutase from Staphylococcus aureus (strain Mu3 / ATCC 700698).